The chain runs to 1384 residues: DNA-directed RNA polymerase subunit beta (1384 aa).

It belongs to the RNA polymerase beta chain family. As to quaternary structure, the RNAP catalytic core consists of 2 alpha, 1 beta, 1 beta' and 1 omega subunit. When a sigma factor is associated with the core the holoenzyme is formed, which can initiate transcription.

It carries out the reaction RNA(n) + a ribonucleoside 5'-triphosphate = RNA(n+1) + diphosphate. DNA-dependent RNA polymerase catalyzes the transcription of DNA into RNA using the four ribonucleoside triphosphates as substrates. The sequence is that of DNA-directed RNA polymerase subunit beta from Xylella fastidiosa (strain M23).